Reading from the N-terminus, the 232-residue chain is N-(5'-phosphoribosyl)anthranilate isomerase (232 aa).

This sequence belongs to the TrpF family.

The catalysed reaction is N-(5-phospho-beta-D-ribosyl)anthranilate = 1-(2-carboxyphenylamino)-1-deoxy-D-ribulose 5-phosphate. It functions in the pathway amino-acid biosynthesis; L-tryptophan biosynthesis; L-tryptophan from chorismate: step 3/5. The chain is N-(5'-phosphoribosyl)anthranilate isomerase (TRP1) from Lipomyces starkeyi (Oleaginous yeast).